Here is a 70-residue protein sequence, read N- to C-terminus: Palustrin-2ISa (70 aa).

The first 22 residues, methionine 1–cysteine 22, serve as a signal peptide directing secretion. The propeptide at glutamate 23 to valine 39 is removed in mature form. Cysteine 64 and cysteine 70 form a disulfide bridge.

In terms of tissue distribution, expressed by the skin glands.

It localises to the secreted. Its function is as follows. Has antimicrobial activity against Gram-negative bacterium E.coli ATCC 8739 (MIC=100 ug), against Gram positive bacteria S.aureus ATCC 6538 (MIC=25 ug), methicillin-resistant S.aureus ATCC 43300 (MIC=100 ug), B.subtilis ATCC 6633 (MIC=12.5 ug) and against fungus C.albicans ATCC 90028 (MIC=100 ug). This chain is Palustrin-2ISa, found in Odorrana ishikawae (Ishikawa's frog).